Reading from the N-terminus, the 329-residue chain is E3 ubiquitin-protein ligase SINA-like 4 (329 aa).

The segment covering 1 to 12 (MTKLGRRNDGGG) has biased composition (basic and acidic residues). The segment at 1-58 (MTKLGRRNDGGGKSHRSSTKRQRRTSVSVDDPSPGEEEEKTLVVLTDDSDSEEDDKPL) is disordered. Residues 13–24 (KSHRSSTKRQRR) are compositionally biased toward basic residues. The segment at 86–122 (CPNCFDPLKKPIFQCNNGHLACFLCCIKLKKRCSFCK) adopts an RING-type; degenerate zinc-finger fold. The interval 136–325 (VIKAGLVSCS…MEISIGDKND (190 aa)) is SBD. Residues 139-198 (AGLVSCSNAIYGCKQSTTYGNQLQSHEKVCVFAPCSCPIKDCNYIGFYKDLINHFRATHK) form an SIAH-type zinc finger. Zn(2+) is bound by residues Cys-144, Cys-151, His-164, Cys-168, Cys-175, Cys-180, His-192, and His-197.

This sequence belongs to the SINA (Seven in absentia) family.

The catalysed reaction is S-ubiquitinyl-[E2 ubiquitin-conjugating enzyme]-L-cysteine + [acceptor protein]-L-lysine = [E2 ubiquitin-conjugating enzyme]-L-cysteine + N(6)-ubiquitinyl-[acceptor protein]-L-lysine.. It functions in the pathway protein modification; protein ubiquitination. Its function is as follows. E3 ubiquitin-protein ligase that mediates ubiquitination and subsequent proteasomal degradation of target proteins. E3 ubiquitin ligases accept ubiquitin from an E2 ubiquitin-conjugating enzyme in the form of a thioester and then directly transfers the ubiquitin to targeted substrates. It probably triggers the ubiquitin-mediated degradation of different substrates. In Arabidopsis thaliana (Mouse-ear cress), this protein is E3 ubiquitin-protein ligase SINA-like 4.